Reading from the N-terminus, the 81-residue chain is Small ribosomal subunit protein bS16 (81 aa).

It belongs to the bacterial ribosomal protein bS16 family.

The chain is Small ribosomal subunit protein bS16 from Neisseria meningitidis serogroup C (strain 053442).